Consider the following 429-residue polypeptide: DNA primase DnaG (429 aa).

In terms of domain architecture, Toprim spans 172 to 246; sequence DSIIVVEGRN…DVDFIARAPP (75 aa). Mg(2+)-binding residues include E178, D220, and D222. The tract at residues 287–322 is disordered; that stretch reads RNTKELEERQGNELKNERPEKINENEESEKNVELKE.

Belongs to the archaeal DnaG primase family. As to quaternary structure, forms a ternary complex with MCM helicase and DNA. Component of the archaeal exosome complex. It depends on Mg(2+) as a cofactor.

It catalyses the reaction ssDNA + n NTP = ssDNA/pppN(pN)n-1 hybrid + (n-1) diphosphate.. Its function is as follows. RNA polymerase that catalyzes the synthesis of short RNA molecules used as primers for DNA polymerase during DNA replication. Also part of the exosome, which is a complex involved in RNA degradation. Acts as a poly(A)-binding protein that enhances the interaction between heteromeric, adenine-rich transcripts and the exosome. This Picrophilus torridus (strain ATCC 700027 / DSM 9790 / JCM 10055 / NBRC 100828 / KAW 2/3) protein is DNA primase DnaG.